The following is a 1045-amino-acid chain: Isoleucine--tRNA ligase (1045 aa).

The 'HIGH' region signature appears at 49–59 (PYCSGRIHLGT). The short motif at 591-595 (KMSKS) is the 'KMSKS' region element. Lysine 594 is a binding site for ATP.

Belongs to the class-I aminoacyl-tRNA synthetase family. IleS type 2 subfamily. As to quaternary structure, monomer. Zn(2+) is required as a cofactor.

It is found in the cytoplasm. It carries out the reaction tRNA(Ile) + L-isoleucine + ATP = L-isoleucyl-tRNA(Ile) + AMP + diphosphate. Catalyzes the attachment of isoleucine to tRNA(Ile). As IleRS can inadvertently accommodate and process structurally similar amino acids such as valine, to avoid such errors it has two additional distinct tRNA(Ile)-dependent editing activities. One activity is designated as 'pretransfer' editing and involves the hydrolysis of activated Val-AMP. The other activity is designated 'posttransfer' editing and involves deacylation of mischarged Val-tRNA(Ile). The protein is Isoleucine--tRNA ligase of Methanothermobacter marburgensis (strain ATCC BAA-927 / DSM 2133 / JCM 14651 / NBRC 100331 / OCM 82 / Marburg) (Methanobacterium thermoautotrophicum).